A 254-amino-acid chain; its full sequence is 3-deoxy-manno-octulosonate cytidylyltransferase (254 aa).

The protein belongs to the KdsB family.

It is found in the cytoplasm. It carries out the reaction 3-deoxy-alpha-D-manno-oct-2-ulosonate + CTP = CMP-3-deoxy-beta-D-manno-octulosonate + diphosphate. Its pathway is nucleotide-sugar biosynthesis; CMP-3-deoxy-D-manno-octulosonate biosynthesis; CMP-3-deoxy-D-manno-octulosonate from 3-deoxy-D-manno-octulosonate and CTP: step 1/1. It functions in the pathway bacterial outer membrane biogenesis; lipopolysaccharide biosynthesis. In terms of biological role, activates KDO (a required 8-carbon sugar) for incorporation into bacterial lipopolysaccharide in Gram-negative bacteria. The polypeptide is 3-deoxy-manno-octulosonate cytidylyltransferase (Bordetella pertussis (strain Tohama I / ATCC BAA-589 / NCTC 13251)).